The following is a 397-amino-acid chain: Elongation factor Tu (397 aa).

A tr-type G domain is found at 10 to 206; that stretch reads KPHVNIGTIG…AVDTAIPEPE (197 aa). The interval 19–26 is G1; that stretch reads GHIDHGKT. GTP is bound at residue 19–26; sequence GHIDHGKT. Mg(2+) is bound at residue threonine 26. The segment at 62 to 66 is G2; the sequence is GITIS. The segment at 83–86 is G3; it reads DCPG. GTP-binding positions include 83-87 and 138-141; these read DCPGH and NKAD. Positions 138–141 are G4; the sequence is NKAD. A G5 region spans residues 176 to 178; it reads SAL.

The protein belongs to the TRAFAC class translation factor GTPase superfamily. Classic translation factor GTPase family. EF-Tu/EF-1A subfamily. In terms of assembly, monomer.

The protein resides in the cytoplasm. The enzyme catalyses GTP + H2O = GDP + phosphate + H(+). In terms of biological role, GTP hydrolase that promotes the GTP-dependent binding of aminoacyl-tRNA to the A-site of ribosomes during protein biosynthesis. This Kineococcus radiotolerans (strain ATCC BAA-149 / DSM 14245 / SRS30216) protein is Elongation factor Tu.